Reading from the N-terminus, the 1375-residue chain is Mediator of RNA polymerase II transcription subunit 13 (1375 aa).

The disordered stretch occupies residues 1–51 (MKASEMARPPMRPGNPHAFASPATTPSRTASPNNAQGANVRTTQGGNQAGA). Residues 22–51 (PATTPSRTASPNNAQGANVRTTQGGNQAGA) are compositionally biased toward polar residues. Coiled coils occupy residues 182–216 (ADDS…WLSR) and 297–324 (QLER…KDEA). Over residues 313 to 324 (AEEDAMRRKDEA) the composition is skewed to basic and acidic residues. Disordered stretches follow at residues 313-333 (AEED…SSPF), 350-370 (YPTP…DTPS), 397-417 (YTTT…APLE), 537-581 (ATSP…PASL), 660-689 (RAVS…VDTH), 841-862 (QAKG…IPSN), and 1233-1285 (TPTT…AADP). Residues 397–411 (YTTTDNQQHASTSPT) are compositionally biased toward polar residues. Positions 666-685 (SASDSESETSDMSEGSPEDP) are enriched in acidic residues. The segment covering 1233 to 1259 (TPTTPAPSNSSAQANTNTPGSTPQTGV) has biased composition (polar residues).

The protein belongs to the Mediator complex subunit 13 family. Component of the SRB8-11 complex, which itself associates with the Mediator complex.

Its subcellular location is the nucleus. Component of the SRB8-11 complex. The SRB8-11 complex is a regulatory module of the Mediator complex which is itself involved in regulation of basal and activated RNA polymerase II-dependent transcription. The SRB8-11 complex may be involved in the transcriptional repression of a subset of genes regulated by Mediator. It may inhibit the association of the Mediator complex with RNA polymerase II to form the holoenzyme complex. The protein is Mediator of RNA polymerase II transcription subunit 13 (SSN2) of Phaeosphaeria nodorum (strain SN15 / ATCC MYA-4574 / FGSC 10173) (Glume blotch fungus).